Consider the following 20-residue polypeptide: U27-ctenitoxin-Pn1a (20 aa).

Positions 1–20 (LAKRADICQPGKTSQRACET) are disordered. Residues 11 to 20 (GKTSQRACET) show a composition bias toward polar residues.

In terms of processing, contains 4 disulfide bonds. As to expression, expressed by the venom gland.

The protein resides in the secreted. In terms of biological role, has a vascular smooth muscle contracting activity. Causes short-lived contractions of both arterial and venous rabbit vessels. The protein is U27-ctenitoxin-Pn1a of Phoneutria nigriventer (Brazilian armed spider).